We begin with the raw amino-acid sequence, 22 residues long: Chlorate reductase subunit gamma (22 aa).

Residues 1 to 22 are disordered; sequence EXSEQNPNILEIKPGDTVKVXT.

In terms of assembly, heterotrimer of alpha, beta and gamma subunits. It depends on heme b as a cofactor.

The protein resides in the cytoplasm. Functionally, may transfer electrons to the iron-sulfur centers of the beta subunit of chlorate reductase. The chain is Chlorate reductase subunit gamma from Stutzerimonas chloritidismutans (Pseudomonas chloritidismutans).